Here is a 361-residue protein sequence, read N- to C-terminus: MGQPIAIEVRNVSKRYSDDPGLAPALDNVSVNIADNEFFTLLGPSGCGKTTLLRAIAGFEHVSDGEIRLAGETVNHLPPFKRRVNTVFQSYALFPHMSVAQNIAFGLEMQGLDRKTIPGRVDEMLALVQMEHLAGRKPAQLSGGQQQRVALARALAPKPKVLLLDEPLSALDLKLRKEMQVELKRVQQEAGITFIFVTHDQEEALTLSDRIAVMSAGKILQIGTPIDIYERPQHRFVAQFIGDINFLPGQLKRGEHNENIFVPNGMPVEIPCPPQGVNGSSVQLAFRPERSQLVAADQPHHLRGVIEAVLYVGTATLYQCRLNNDIKVMLRENNEGLNRGRAVGEPVAVHLPPQACLLMEA.

In terms of domain architecture, ABC transporter spans 7-241; the sequence is IEVRNVSKRY…PQHRFVAQFI (235 aa). 43–50 is a binding site for ATP; it reads GPSGCGKT.

It belongs to the ABC transporter superfamily. Spermidine/putrescine importer (TC 3.A.1.11.1) family. The complex is composed of two ATP-binding proteins (PotA), two transmembrane proteins (PotB and PotC) and a solute-binding protein (PotD).

The protein resides in the cell inner membrane. The catalysed reaction is ATP + H2O + polyamine-[polyamine-binding protein]Side 1 = ADP + phosphate + polyamineSide 2 + [polyamine-binding protein]Side 1.. In terms of biological role, part of the ABC transporter complex PotABCD involved in spermidine/putrescine import. Responsible for energy coupling to the transport system. This is Spermidine/putrescine import ATP-binding protein PotA from Pseudomonas fluorescens (strain Pf0-1).